We begin with the raw amino-acid sequence, 481 residues long: Inosine-5'-monophosphate dehydrogenase (481 aa).

CBS domains follow at residues 92 to 148 (VIND…SKKV) and 152 to 209 (MTKM…PEAN). NAD(+) contacts are provided by residues Asp244 and 293–295 (GIG). K(+) contacts are provided by Gly295 and Gly297. Ser298 contributes to the IMP binding site. Cys300 contributes to the K(+) binding site. Cys300 serves as the catalytic Thioimidate intermediate. IMP-binding positions include 333–335 (DGG), 356–357 (GS), and 380–384 (YRGMG). Residue Arg396 is the Proton acceptor of the active site. Residue Glu410 participates in IMP binding. Residues Glu464, Ser465, and His466 each contribute to the K(+) site.

This sequence belongs to the IMPDH/GMPR family. As to quaternary structure, homotetramer. Requires K(+) as cofactor.

It carries out the reaction IMP + NAD(+) + H2O = XMP + NADH + H(+). The protein operates within purine metabolism; XMP biosynthesis via de novo pathway; XMP from IMP: step 1/1. Its activity is regulated as follows. Mycophenolic acid (MPA) is a non-competitive inhibitor that prevents formation of the closed enzyme conformation by binding to the same site as the amobile flap. In contrast, mizoribine monophosphate (MZP) is a competitive inhibitor that induces the closed conformation. MPA is a potent inhibitor of mammalian IMPDHs but a poor inhibitor of the bacterial enzymes. MZP is a more potent inhibitor of bacterial IMPDH. Its function is as follows. Catalyzes the conversion of inosine 5'-phosphate (IMP) to xanthosine 5'-phosphate (XMP), the first committed and rate-limiting step in the de novo synthesis of guanine nucleotides, and therefore plays an important role in the regulation of cell growth. The sequence is that of Inosine-5'-monophosphate dehydrogenase from Helicobacter pylori (strain J99 / ATCC 700824) (Campylobacter pylori J99).